Here is a 672-residue protein sequence, read N- to C-terminus: Zinc finger and BTB domain-containing protein 24 (672 aa).

Positions 39–105 (CDITLIVEDV…MYSAVVLVDE (67 aa)) constitute a BTB domain. The interval 136 to 208 (HMQVKRKRGR…GKRKIKQPIR (73 aa)) is disordered. Positions 140–152 (KRKRGRPKKNQDL) form a DNA-binding region, a.T hook 1. Residues 148 to 158 (KNQDLSQKENP) are compositionally biased toward basic and acidic residues. Over residues 160–171 (SELQAQTSSEIQ) the composition is skewed to polar residues. Residues 198 to 208 (EGKRKIKQPIR) are compositionally biased toward basic residues. A DNA-binding region (a.T hook 2) is located at residues 223 to 235 (PGKRGRRRKYPDT). 8 C2H2-type zinc fingers span residues 237–259 (ARCE…QRTH), 265–287 (FRCS…QRMH), 293–315 (YICT…MNLH), 321–343 (FTCE…NRVH), 349–371 (PECA…LRTH), 377–399 (FTCE…IRIH), 405–427 (YVCK…EVSH), and 433–455 (FSCS…IKTH). The tract at residues 453 to 492 (KTHNKENPPAQAESTDKPPQSAPEQQEQEQQQQQQTSGDK) is disordered. Positions 476-487 (EQQEQEQQQQQQ) are enriched in low complexity.

Belongs to the krueppel C2H2-type zinc-finger protein family.

It is found in the nucleus. Its function is as follows. May be involved in BMP2-induced transcription. The sequence is that of Zinc finger and BTB domain-containing protein 24 (zbtb24) from Danio rerio (Zebrafish).